We begin with the raw amino-acid sequence, 213 residues long: Octanoyltransferase (213 aa).

One can recognise a BPL/LPL catalytic domain in the interval 35–213; the sequence is DKHGDAVLLL…ERHLPTLVGA (179 aa). Residues 73–80, 145–147, and 158–160 contribute to the substrate site; these read RGGKITWH, AIG, and GFS. The Acyl-thioester intermediate role is filled by Cys176.

It belongs to the LipB family.

The protein resides in the cytoplasm. It carries out the reaction octanoyl-[ACP] + L-lysyl-[protein] = N(6)-octanoyl-L-lysyl-[protein] + holo-[ACP] + H(+). It participates in protein modification; protein lipoylation via endogenous pathway; protein N(6)-(lipoyl)lysine from octanoyl-[acyl-carrier-protein]: step 1/2. Functionally, catalyzes the transfer of endogenously produced octanoic acid from octanoyl-acyl-carrier-protein onto the lipoyl domains of lipoate-dependent enzymes. Lipoyl-ACP can also act as a substrate although octanoyl-ACP is likely to be the physiological substrate. This chain is Octanoyltransferase, found in Salinispora arenicola (strain CNS-205).